The following is a 598-amino-acid chain: Protein unc-93 homolog B1 (598 aa).

Positions 1–36 (MEVEPPLYPVAGAAGPQGDEDRHGVPDGPEAPLDEL) are disordered. The next 5 helical transmembrane spans lie at 64-84 (VLAASTGVTLTYGVYLGLLQM), 110-130 (KMLMGINVTPIAALLYTPVLI), 132-152 (FFGTKWMMFLAVGIYALFVST), 160-180 (TLVPSAVALGMAIVPLWASMG), and 223-243 (IFYSFFHLSFACAQLPMIYFL). N251 and N272 each carry an N-linked (GlcNAc...) asparagine glycan. 5 helical membrane passes run 285–305 (LIVVESVLMAVAFLAMLMVLG), 343–363 (LVPFFIYSGFEVLFACTGFAL), 378–398 (LLIAYSLGASASSVLGLLGLW), 403–423 (VPLVAGAGLHLLLTLSLFFWA), and 428–448 (VLQHSWIFYFVAALWGVGSAL). N449 carries an N-linked (GlcNAc...) asparagine glycan. Helical transmembrane passes span 469–489 (FIFTIYHWWQAVAIFVVYLGS) and 495–515 (AKLAVLLVTLVAAAASYLWME). The segment at 524–598 (PRQPRIPKPQ…ALGGDGPEEQ (75 aa)) is disordered. Acidic residues predominate over residues 544–554 (EDNSDESDMEG). Residues S547 and S550 each carry the phosphoserine modification.

This sequence belongs to the unc-93 family. As to quaternary structure, interacts with TLR3, TLR5, TLR7, TLR8, TLR9 and TLR13 (probably via transmembrane domain). N-glycosylated.

It localises to the endoplasmic reticulum membrane. Its subcellular location is the endosome. The protein localises to the lysosome. The protein resides in the cytoplasmic vesicle. It is found in the phagosome. Functionally, plays an important role in innate and adaptive immunity by regulating nucleotide-sensing Toll-like receptor (TLR) signaling. Required for the transport of a subset of TLRs (including TLR3, TLR7 and TLR9) from the endoplasmic reticulum to endolysosomes where they can engage pathogen nucleotides and activate signaling cascades. May play a role in autoreactive B-cells removal. The protein is Protein unc-93 homolog B1 of Mus musculus (Mouse).